The primary structure comprises 252 residues: MPIGSIAIGAPGEASHPDTIKASLAEFISTLIFVFAGEGSGMAFNKLTNDGSTTPAGLVAASLAHGFALFVAVSVGANISGGHVNPAVTFGAFLGGNISLIRGILYWIAQLLGSVVACLLLKLATGGLETSAFSLSSDVSVWNAVVFEIVMTFGLVYTVYATAVDPRKGDLGVIAPIAIGFIVGANILAGGAFDGASMNPAVSFGPAVVSWTWDNHWVYWVGPLIGAAIAALVYDGVFIGQATHEQLPPSDY.

Residues 1–23 (MPIGSIAIGAPGEASHPDTIKAS) are Cytoplasmic-facing. The chain crosses the membrane as a helical span at residues 24-44 (LAEFISTLIFVFAGEGSGMAF). The Vacuolar portion of the chain corresponds to 45–55 (NKLTNDGSTTP). The chain crosses the membrane as a helical span at residues 56-76 (AGLVAASLAHGFALFVAVSVG). Over 77–103 (ANISGGHVNPAVTFGAFLGGNISLIRG) the chain is Cytoplasmic. An NPA 1 motif is present at residues 85 to 87 (NPA). The chain crosses the membrane as a helical span at residues 104–124 (ILYWIAQLLGSVVACLLLKLA). At 125–143 (TGGLETSAFSLSSDVSVWN) the chain is on the vacuolar side. The chain crosses the membrane as a helical span at residues 144–164 (AVVFEIVMTFGLVYTVYATAV). Over 165 to 172 (DPRKGDLG) the chain is Cytoplasmic. The helical transmembrane segment at 173–193 (VIAPIAIGFIVGANILAGGAF) threads the bilayer. Topologically, residues 194-219 (DGASMNPAVSFGPAVVSWTWDNHWVY) are vacuolar. The NPA 2 signature appears at 199-201 (NPA). The helical transmembrane segment at 220 to 240 (WVGPLIGAAIAALVYDGVFIG) threads the bilayer. The Cytoplasmic portion of the chain corresponds to 241 to 252 (QATHEQLPPSDY).

Belongs to the MIP/aquaporin (TC 1.A.8) family. TIP (TC 1.A.8.10) subfamily. In terms of tissue distribution, mainly expressed in fruits and leaves, and, to a lower extent, in roots, stems and flowers.

The protein localises to the vacuole membrane. In terms of biological role, water channel required to facilitate the transport of water from the vacuolar compartment to the cytoplasm. The chain is Aquaporin TIP1-2 from Musa acuminata (Banana).